The primary structure comprises 342 residues: Ferredoxin--NADP reductase (342 aa).

Residues Cys-17, Asp-36, Gln-44, Tyr-49, Val-89, Phe-124, Asp-289, and Thr-330 each contribute to the FAD site.

Belongs to the ferredoxin--NADP reductase type 2 family. Homodimer. Requires FAD as cofactor.

The catalysed reaction is 2 reduced [2Fe-2S]-[ferredoxin] + NADP(+) + H(+) = 2 oxidized [2Fe-2S]-[ferredoxin] + NADPH. The chain is Ferredoxin--NADP reductase from Bradyrhizobium sp. (strain BTAi1 / ATCC BAA-1182).